The sequence spans 420 residues: Nucleoporin NUP42 (420 aa).

The segment at 1–25 adopts a C3H1-type zinc-finger fold; sequence MTICQFFLQGRCRFGDRCWNEHPGA. One copy of the FG 1 repeat lies at 14 to 15; the sequence is FG. A disordered region spans residues 25 to 111; it reads ARGAGGARQP…FASPLSDEQK (87 aa). Residues 42 to 67 are compositionally biased toward polar residues; it reads SGNNRRGWNASSQRYSNVIQPSSFPK. FG repeat units follow at residues 82-83, 95-96, 218-219, 220-221, 228-229, 265-266, 271-272, 288-289, 345-346, and 364-365; these read FG. The segment covering 87–102 has biased composition (polar residues); it reads SGASTSRGFGSSQNPF. Positions 323–345 are disordered; that stretch reads MAASPSGSTTAPPLRSGSSVVGF. An interaction with GLE1 region spans residues 365–420; it reads GGSGISTSVLASGAADNALFTPRDQLMKEELEQFQSQRFTLGKIPLKPPPVELLTV.

In terms of assembly, probable component of the nuclear pore complex (NPC). Interacts with nuclear export protein NXF1. Interacts with GLE1. Able to form a heterotrimer with NUP155 and GLE1 in vitro. Interacts with XPO1. Post-translationally, O-glycosylated.

The protein resides in the nucleus. It is found in the nuclear pore complex. The protein localises to the nucleus membrane. Functionally, required for the export of mRNAs containing poly(A) tails from the nucleus into the cytoplasm. The polypeptide is Nucleoporin NUP42 (Nup42) (Mus musculus (Mouse)).